Reading from the N-terminus, the 307-residue chain is Heparan sulfate glucosamine 3-O-sulfotransferase 1 (307 aa).

Positions 1–20 (MAALLLGAVLLVAQPQLVPS) are cleaved as a signal peptide. Asn-48 is a glycosylation site (N-linked (GlcNAc...) asparagine). Residues 64–68 (KGGTR), Arg-147, and Ser-155 contribute to the 3'-phosphoadenylyl sulfate site. N-linked (GlcNAc...) asparagine glycans are attached at residues Asn-192, Asn-242, and Asn-249. Tyr-255 provides a ligand contact to 3'-phosphoadenylyl sulfate. Cys-256 and Cys-265 are joined by a disulfide. 270-274 (KGRAH) contributes to the 3'-phosphoadenylyl sulfate binding site.

The protein belongs to the sulfotransferase 1 family. Highly expressed in the brain and kidney and weakly expressed in the heart, lung and placenta.

It localises to the golgi apparatus lumen. The enzyme catalyses alpha-D-glucosaminyl-[heparan sulfate](n) + 3'-phosphoadenylyl sulfate = 3-sulfo-alpha-D-glucosaminyl-[heparan sulfate](n) + adenosine 3',5'-bisphosphate + H(+). Its function is as follows. Sulfotransferase that utilizes 3'-phospho-5'-adenylyl sulfate (PAPS) to catalyze the transfer of a sulfo group to position 3 of glucosamine residues in heparan. Catalyzes the rate limiting step in the biosynthesis of heparan sulfate (HSact). This modification is a crucial step in the biosynthesis of anticoagulant heparan sulfate as it completes the structure of the antithrombin pentasaccharide binding site. The chain is Heparan sulfate glucosamine 3-O-sulfotransferase 1 (HS3ST1) from Homo sapiens (Human).